Here is a 416-residue protein sequence, read N- to C-terminus: CinA-like protein (416 aa).

The protein belongs to the CinA family.

The polypeptide is CinA-like protein (Solibacter usitatus (strain Ellin6076)).